The chain runs to 700 residues: Elongation factor G (700 aa).

Positions S10–L286 constitute a tr-type G domain. Residues A19–T26, D83–H87, and N137–D140 contribute to the GTP site.

This sequence belongs to the TRAFAC class translation factor GTPase superfamily. Classic translation factor GTPase family. EF-G/EF-2 subfamily.

The protein localises to the cytoplasm. Catalyzes the GTP-dependent ribosomal translocation step during translation elongation. During this step, the ribosome changes from the pre-translocational (PRE) to the post-translocational (POST) state as the newly formed A-site-bound peptidyl-tRNA and P-site-bound deacylated tRNA move to the P and E sites, respectively. Catalyzes the coordinated movement of the two tRNA molecules, the mRNA and conformational changes in the ribosome. In Mycolicibacterium gilvum (strain PYR-GCK) (Mycobacterium gilvum (strain PYR-GCK)), this protein is Elongation factor G.